Here is a 244-residue protein sequence, read N- to C-terminus: Venom nerve growth factor 3 (244 aa).

A signal peptide spans 1–18 (MSMLCYTLIIAFLIGIWA). Residues 19–125 (APKSEDNVPL…TLNRNIRAKR (107 aa)) constitute a propeptide that is removed on maturation. A compositionally biased stretch (basic and acidic residues) spans 47–66 (GLKTSRNTDQRHPAPKKAED). A disordered region spans residues 47 to 67 (GLKTSRNTDQRHPAPKKAEDQ). Disulfide bonds link cysteine 139-cysteine 205, cysteine 181-cysteine 233, and cysteine 193-cysteine 235.

The protein belongs to the NGF-beta family. Homodimer; non-covalently linked. In terms of tissue distribution, expressed by the venom gland.

It is found in the secreted. Its function is as follows. Nerve growth factor is important for the development and maintenance of the sympathetic and sensory nervous systems. It stimulates division and differentiation of sympathetic and embryonic sensory neurons as well as basal forebrain cholinergic neurons in the brain. Its relevance in the snake venom is not clear. However, it has been shown to inhibit metalloproteinase-dependent proteolysis of platelet glycoprotein Ib alpha, suggesting a metalloproteinase inhibition to prevent metalloprotease autodigestion and/or protection against prey proteases. Binds a lipid between the two protein chains in the homodimer. The lipid-bound form promotes histamine relase from mouse mast cells, contrary to the lipid-free form. In Notechis scutatus scutatus (Mainland tiger snake), this protein is Venom nerve growth factor 3.